A 92-amino-acid polypeptide reads, in one-letter code: Acyl-CoA-binding protein (92 aa).

Positions 3-88 constitute an ACB domain; the sequence is LKEDFEEHAE…VKQLLEAEAS (86 aa). Residues 30 to 34, Lys-56, and Tyr-75 contribute to the an acyl-CoA site; that span reads YGLYK.

The protein belongs to the ACBP family.

Functionally, binds medium- and long-chain acyl-CoA esters with very high affinity and may function as an intracellular carrier of acyl-CoA esters. The polypeptide is Acyl-CoA-binding protein (Brassica napus (Rape)).